Consider the following 618-residue polypeptide: Matrix metalloproteinase-24 (618 aa).

An N-terminal signal peptide occupies residues 1–41; it reads MPRSRGGRAAPGQAARWSGWRAPGRLLPLLPALCCLAAAAG. Positions 42–128 are excised as a propeptide; sequence AGKPAGADAP…HLSRRRRNKR (87 aa). Over 42–575 the chain is Extracellular; sequence AGKPAGADAP…IDDVPGSVNA (534 aa). The short motif at 110–117 is the Cysteine switch element; the sequence is PRCGVPDH. Positions 112 and 255 each coordinate Zn(2+). Residue glutamate 256 is part of the active site. The Zn(2+) site is built by histidine 259 and histidine 265. A disordered region spans residues 296-352; that stretch reads QKIYGPPAEPLEPTRPLPTLPVRRIHSPSERKHERQPRPPRPPLGDRPSTPGAKPNI. Pro residues predominate over residues 302 to 314; that stretch reads PAEPLEPTRPLPT. The segment covering 322–332 has biased composition (basic and acidic residues); that stretch reads SPSERKHERQP. Hemopexin repeat units lie at residues 350–398, 399–444, 446–494, and 495–542; these read PNIC…WKGL, PARI…GSCL, REGI…KGIP, and QAPQ…WMGC. Residues cysteine 353 and cysteine 542 are joined by a disulfide bond. A helical membrane pass occupies residues 576–596; sequence VAVVVPCTLSLCLLVLLYTIF. Over 597-618 the chain is Cytoplasmic; the sequence is QFKNKTGPQPVTYYKRPVQEWV. Residues 616–618 carry the PDZ-binding motif; it reads EWV.

This sequence belongs to the peptidase M10A family. As to quaternary structure, interacts (via PDZ-binding motif) with APBA3 (via PDZ domain). Interacts with GRIP1 and GRIP2. The cofactor is Zn(2+). Ca(2+) serves as cofactor. Post-translationally, cleaved by a furin endopeptidase in the trans-Golgi network. In terms of tissue distribution, predominantly expressed in the nervous system: while enriched in the central nervous system, expression is also detected in the peripheral nervous system, including the trigeminal ganglion. Expression is not restricted to the nervous system: it is also enriched in the thymus, with a lower level of expression present in the aorta. In brain, high expression is present in the brain parenchyma, particularly within the neocortex.

Its subcellular location is the cell membrane. It localises to the golgi apparatus. The protein localises to the trans-Golgi network membrane. It is found in the secreted. The protein resides in the extracellular space. Its subcellular location is the extracellular matrix. Functionally, metalloprotease that mediates cleavage of N-cadherin (CDH2) and acts as a regulator of neuro-immune interactions and neural stem cell quiescence. Involved in cell-cell interactions between nociceptive neurites and mast cells, possibly by mediating cleavage of CDH2, thereby acting as a mediator of peripheral thermal nociception and inflammatory hyperalgesia. Key regulator of neural stem cells quiescence by mediating cleavage of CDH2, affecting CDH2-mediated anchorage of neural stem cells to ependymocytes in the adult subependymal zone, leading to modulate their quiescence. May play a role in axonal growth. Able to activate progelatinase A. May also be a proteoglycanase involved in degradation of proteoglycans, such as dermatan sulfate and chondroitin sulfate proteoglycans. Cleaves partially fibronectin, but not collagen type I, nor laminin. In Rattus norvegicus (Rat), this protein is Matrix metalloproteinase-24 (Mmp24).